The following is a 353-amino-acid chain: MAVSAIGFEGFEKRLEISFSDPGLFSDPQGRGLRSLTKSQLDEILAPAECTIVSSLANEDVDSYVLSESSLFVYAYKLIIKTCGTTKLLLSIPPILKLADSISLNVRSVRYTRGSFIFPGAQSFPHRHFSEEVAVLDGFFGKLGSGSMAYILGGSDEAQNWHIYCASSDSVSPEGSVYTLEMCMTGLDREKASVFFKEQTGSAAEMTVNSGIRKILRNSEICDFDFEPCGYSMNSVEGSAVSTIHITPEDGFSYASFETAGYDLKAINLNEMVMRVLACFQPTEFSVAVHVDNASKSFEQGCLLDVKGYCCEEKSHQGLGMSGSVVYQKFLKTSYCGSPRSTLKCWKDEDEEE.

Residues Glu9 and Glu12 contribute to the active site. Catalysis depends on Ser69, which acts as the Schiff-base intermediate with substrate; via pyruvic acid. Ser69 carries the post-translational modification Pyruvic acid (Ser); by autocatalysis. Residue Cys83 is the Proton donor; for catalytic activity of the active site. Catalysis depends on proton acceptor; for processing activity residues Ser232 and His245.

It belongs to the eukaryotic AdoMetDC family. Pyruvate is required as a cofactor. In terms of processing, is synthesized initially as an inactive proenzyme. Formation of the active enzyme involves a self-maturation process in which the active site pyruvoyl group is generated from an internal serine residue via an autocatalytic post-translational modification. Two non-identical subunits are generated from the proenzyme in this reaction, and the pyruvate is formed at the N-terminus of the alpha chain, which is derived from the carboxyl end of the proenzyme. The post-translation cleavage follows an unusual pathway, termed non-hydrolytic serinolysis, in which the side chain hydroxyl group of the serine supplies its oxygen atom to form the C-terminus of the beta chain, while the remainder of the serine residue undergoes an oxidative deamination to produce ammonia and the pyruvoyl group blocking the N-terminus of the alpha chain.

The enzyme catalyses S-adenosyl-L-methionine + H(+) = S-adenosyl 3-(methylsulfanyl)propylamine + CO2. Its pathway is amine and polyamine biosynthesis; S-adenosylmethioninamine biosynthesis; S-adenosylmethioninamine from S-adenosyl-L-methionine: step 1/1. The polypeptide is S-adenosylmethionine decarboxylase proenzyme (SAMDC) (Pisum sativum (Garden pea)).